The chain runs to 480 residues: 3-isopropylmalate dehydratase large subunit (480 aa).

Positions 357, 417, and 420 each coordinate [4Fe-4S] cluster. Positions 431–441 (GQRCASTSNRN) are enriched in polar residues. The tract at residues 431 to 454 (GQRCASTSNRNFEGRQGKGGRTHL) is disordered.

The protein belongs to the aconitase/IPM isomerase family. LeuC type 1 subfamily. In terms of assembly, heterodimer of LeuC and LeuD. The cofactor is [4Fe-4S] cluster.

It carries out the reaction (2R,3S)-3-isopropylmalate = (2S)-2-isopropylmalate. The protein operates within amino-acid biosynthesis; L-leucine biosynthesis; L-leucine from 3-methyl-2-oxobutanoate: step 2/4. Functionally, catalyzes the isomerization between 2-isopropylmalate and 3-isopropylmalate, via the formation of 2-isopropylmaleate. This chain is 3-isopropylmalate dehydratase large subunit, found in Mycobacteroides abscessus (strain ATCC 19977 / DSM 44196 / CCUG 20993 / CIP 104536 / JCM 13569 / NCTC 13031 / TMC 1543 / L948) (Mycobacterium abscessus).